The primary structure comprises 290 residues: Pyridoxal kinase PdxY (290 aa).

Residues Ser12 and 47–48 (TQ) contribute to the substrate site. Residues Asp114, Glu151, Lys184, and 211 to 214 (RPLL) contribute to the ATP site. Substrate is bound at residue Asp225.

It belongs to the pyridoxine kinase family. PdxY subfamily. In terms of assembly, homodimer. It depends on Mg(2+) as a cofactor.

It catalyses the reaction pyridoxal + ATP = pyridoxal 5'-phosphate + ADP + H(+). It participates in cofactor metabolism; pyridoxal 5'-phosphate salvage; pyridoxal 5'-phosphate from pyridoxal: step 1/1. Its function is as follows. Pyridoxal kinase involved in the salvage pathway of pyridoxal 5'-phosphate (PLP). Catalyzes the phosphorylation of pyridoxal to PLP. This Pseudomonas fluorescens (strain ATCC BAA-477 / NRRL B-23932 / Pf-5) protein is Pyridoxal kinase PdxY.